An 840-amino-acid polypeptide reads, in one-letter code: Leucine-zipper-like transcriptional regulator 1 (840 aa).

Residue A2 is modified to N-acetylalanine. Kelch repeat units lie at residues 79–128, 130–185, 187–238, 239–285, 295–341, and 399–450; these read AIYV…VYGS, MFVF…VYSD, LWIF…VCRD, KMFV…QRRY, HLYV…PERA, and AMYI…FVLG. 2 consecutive BTB domains span residues 443 to 537 and 667 to 736; these read CDVE…KYPR and CDIT…NMPP.

It belongs to the LZTR1 family. Homodimer. Component of the BCR(LZTR1) E3 ubiquitin ligase complex, at least composed of CUL3, LZTR1 and RBX1. Interacts with Ras (K-Ras/KRAS, N-Ras/NRAS and H-Ras/HRAS). Interacts with RAF1. Interacts with SHOC2. Interacts with PPP1CB. Phosphorylated on tyrosine upon induction of apoptosis, leading to its degradation by the proteasome.

It is found in the endomembrane system. The protein localises to the recycling endosome. Its subcellular location is the golgi apparatus. It participates in protein modification; protein ubiquitination. In terms of biological role, substrate-specific adapter of a BCR (BTB-CUL3-RBX1) E3 ubiquitin-protein ligase complex that mediates ubiquitination of Ras (K-Ras/KRAS, N-Ras/NRAS and H-Ras/HRAS). Is a negative regulator of RAS-MAPK signaling that acts by controlling Ras levels and decreasing Ras association with membranes. The protein is Leucine-zipper-like transcriptional regulator 1 of Homo sapiens (Human).